Consider the following 116-residue polypeptide: Ribonuclease P protein component (116 aa).

It belongs to the RnpA family. In terms of assembly, consists of a catalytic RNA component (M1 or rnpB) and a protein subunit.

It carries out the reaction Endonucleolytic cleavage of RNA, removing 5'-extranucleotides from tRNA precursor.. Its function is as follows. RNaseP catalyzes the removal of the 5'-leader sequence from pre-tRNA to produce the mature 5'-terminus. It can also cleave other RNA substrates such as 4.5S RNA. The protein component plays an auxiliary but essential role in vivo by binding to the 5'-leader sequence and broadening the substrate specificity of the ribozyme. This is Ribonuclease P protein component from Picosynechococcus sp. (strain ATCC 27264 / PCC 7002 / PR-6) (Agmenellum quadruplicatum).